The primary structure comprises 196 residues: Bcl-2-like protein 11 (196 aa).

Residues 1–68 are disordered; sequence MAKQPSDVNS…PLAPPASPGP (68 aa). Polar residues predominate over residues 34–43; the sequence is TSLQTESQGN. Position 65 is a phosphoserine; by MAPK (S65). S73, S83, and S90 each carry phosphoserine. The tract at residues 90–114 is disordered; that stretch reads SGYFSFDTDRSPAPMSCDKSTQTPS. The BH3 signature appears at 146–160; the sequence is IAQELRRIGDEFNET.

It belongs to the Bcl-2 family. As to quaternary structure, forms heterodimers with a number of antiapoptotic Bcl-2 proteins, including MCL1, BCL2, BCL2L1 isoform Bcl-X(L), BCL2A1/BFL-1, and BCL2L2/BCLW. Does not heterodimerize with proapoptotic proteins such as BAD, BOK or BAK. Identified in a complex containing BCL2L11, DYNLL1 and BCL2L1 isoform Bcl-X(L); BH3 integrity is required for BCL2L1-binding. Interacts with YWHAZ. When phosphorylated, interacts with TRIM2; this interaction is associated with ubiquitination and degradation. Interacts (via BH3) with MCL1; this interaction may sequester BCL2L11 and prevent its pro-apoptotic activity. When phosphorylated, isoform BimEL interacts with USP27X; this interaction leads to BCL2L11 deubiquitination and stabilization. Interacts with GIMAP5. Interacts with BCL2L10/BCL-B. In terms of processing, phosphorylation at Ser-65 by MAPK1/MAPK3 leads interaction with TRIM2 and ubiquitination, followed by proteasomal degradation. Deubiquitination catalyzed by USP27X stabilizes the protein. Ubiquitination by TRIM2 following phosphorylation by MAPK1/MAPK3 leads to proteasomal degradation. Conversely, deubiquitination catalyzed by USP27X stabilizes the protein. In terms of tissue distribution, widely expressed.

It localises to the membrane. The protein localises to the mitochondrion. Its function is as follows. Induces apoptosis and anoikis. This Rattus norvegicus (Rat) protein is Bcl-2-like protein 11 (Bcl2l11).